Here is a 362-residue protein sequence, read N- to C-terminus: UV excision repair protein RAD23 homolog A (362 aa).

The Ubiquitin-like domain occupies M1 to T81. Disordered stretches follow at residues K80–G160 and G201–G227. The span at P88 to S109 shows a compositional bias: low complexity. Residue K122 forms a Glycyl lysine isopeptide (Lys-Gly) (interchain with G-Cter in ubiquitin) linkage. 5 positions are modified to phosphoserine: S123, S128, S133, S136, and S138. A compositionally biased stretch (low complexity) spans E126–S144. One can recognise a UBA 1 domain in the interval S161 to G201. Phosphoserine occurs at positions 205, 294, and 356. A UBA 2 domain is found at P317–Q357.

Belongs to the RAD23 family. As to quaternary structure, interacts with XPC; the interaction is suggesting the existence of a functional equivalent variant XPC complex. Interacts with PSMD4 and PSMC5. Interacts with ATXN3. Interacts with UBQLN2.

It localises to the nucleus. Multiubiquitin chain receptor involved in modulation of proteasomal degradation. Binds to 'Lys-48'-linked polyubiquitin chains in a length-dependent manner and with a lower affinity to 'Lys-63'-linked polyubiquitin chains. Proposed to be capable to bind simultaneously to the 26S proteasome and to polyubiquitinated substrates and to deliver ubiquitinated proteins to the proteasome. In terms of biological role, involved in nucleotide excision repair and is thought to be functional equivalent for RAD23B in global genome nucleotide excision repair (GG-NER) by association with XPC. In vitro, XPC:RAD23A dimer has NER activity. Can stabilize XPC. In Bos taurus (Bovine), this protein is UV excision repair protein RAD23 homolog A (RAD23A).